The chain runs to 265 residues: Imidazole glycerol phosphate synthase subunit HisF (265 aa).

Active-site residues include Asp17 and Asp136.

Belongs to the HisA/HisF family. Heterodimer of HisH and HisF.

It localises to the cytoplasm. The enzyme catalyses 5-[(5-phospho-1-deoxy-D-ribulos-1-ylimino)methylamino]-1-(5-phospho-beta-D-ribosyl)imidazole-4-carboxamide + L-glutamine = D-erythro-1-(imidazol-4-yl)glycerol 3-phosphate + 5-amino-1-(5-phospho-beta-D-ribosyl)imidazole-4-carboxamide + L-glutamate + H(+). It functions in the pathway amino-acid biosynthesis; L-histidine biosynthesis; L-histidine from 5-phospho-alpha-D-ribose 1-diphosphate: step 5/9. IGPS catalyzes the conversion of PRFAR and glutamine to IGP, AICAR and glutamate. The HisF subunit catalyzes the cyclization activity that produces IGP and AICAR from PRFAR using the ammonia provided by the HisH subunit. The chain is Imidazole glycerol phosphate synthase subunit HisF from Mycobacterium avium (strain 104).